A 167-amino-acid polypeptide reads, in one-letter code: Transcriptional regulator MraZ (167 aa).

SpoVT-AbrB domains follow at residues 8–51 and 92–135; these read ESNH…YGDH and SFPT…NPAT.

It belongs to the MraZ family. In terms of assembly, forms oligomers.

The protein localises to the cytoplasm. It localises to the nucleoid. This is Transcriptional regulator MraZ from Ruegeria pomeroyi (strain ATCC 700808 / DSM 15171 / DSS-3) (Silicibacter pomeroyi).